Reading from the N-terminus, the 640-residue chain is 1,4-alpha-glucan branching enzyme GlgB (640 aa).

Asp-318 functions as the Nucleophile in the catalytic mechanism. Glu-371 functions as the Proton donor in the catalytic mechanism.

This sequence belongs to the glycosyl hydrolase 13 family. GlgB subfamily. In terms of assembly, monomer.

It catalyses the reaction Transfers a segment of a (1-&gt;4)-alpha-D-glucan chain to a primary hydroxy group in a similar glucan chain.. It participates in glycan biosynthesis; glycogen biosynthesis. Catalyzes the formation of the alpha-1,6-glucosidic linkages in glycogen by scission of a 1,4-alpha-linked oligosaccharide from growing alpha-1,4-glucan chains and the subsequent attachment of the oligosaccharide to the alpha-1,6 position. This is 1,4-alpha-glucan branching enzyme GlgB from Francisella tularensis subsp. holarctica (strain FTNF002-00 / FTA).